The sequence spans 255 residues: Phosphatidylcholine synthase (255 aa).

Topologically, residues 1–13 (MNPIKPPFTLNQY) are cytoplasmic. Residues 14–34 (FAAWFVHVFTASAACIGVFSL) traverse the membrane as a helical segment. Residues 35–42 (YKIYQHDY) lie on the Periplasmic side of the membrane. A helical transmembrane segment spans residues 43-63 (VFALWLMAITVFIDAVDGSLA). Residues 64–76 (RLVHVKSVLPKID) are Cytoplasmic-facing. The chain crosses the membrane as a helical span at residues 77-97 (GALLDNIVDYLNYVITPCFFL). Over 98–103 (LVKPGM) the chain is Periplasmic. A helical transmembrane segment spans residues 104-124 (LPADYVVPITAAITITSAYQF). Residues 125 to 133 (CQDDAKTPD) are Cytoplasmic-facing. A helical transmembrane segment spans residues 134 to 154 (HFFKGFPCYWNITVFYMYIFN). Thr155 is a topological domain (periplasmic). A helical transmembrane segment spans residues 156-175 (SMIVNTVLLSLFCVLIFIPV). Residues 176–190 (KYVYPSRLDYLTESR) lie on the Cytoplasmic side of the membrane. Residues 191 to 211 (VLKILMHCCSALYGISSFCLL) traverse the membrane as a helical segment. Residues 212–217 (VNYPET) are Periplasmic-facing. The chain crosses the membrane as a helical span at residues 218 to 238 (NKLWVSLSLGYVGMYLFLSFY). Residues 239 to 255 (RTYYPMFKAKITANNKD) lie on the Cytoplasmic side of the membrane.

Belongs to the CDP-alcohol phosphatidyltransferase class-I family. Mn(2+) is required as a cofactor.

It is found in the cell inner membrane. The enzyme catalyses a CDP-1,2-diacyl-sn-glycerol + choline = a 1,2-diacyl-sn-glycero-3-phosphocholine + CMP + H(+). Its function is as follows. Condenses choline with CDP-diglyceride to produce phosphatidylcholine and CMP. Affects virulence of this bacterium when there is a complete loss of phosphatidylcholine formation due to absence of both the synthase (pcs) and the methylation (pmtA) pathways. Reduced virulence results from lowered yields of bacteria within host macrophages and because of loss of high multiplicity cytotoxicity. The protein is Phosphatidylcholine synthase of Legionella pneumophila subsp. pneumophila (strain Philadelphia 1 / ATCC 33152 / DSM 7513).